Reading from the N-terminus, the 185-residue chain is Ribosome-recycling factor (185 aa).

This sequence belongs to the RRF family.

It is found in the cytoplasm. In terms of biological role, responsible for the release of ribosomes from messenger RNA at the termination of protein biosynthesis. May increase the efficiency of translation by recycling ribosomes from one round of translation to another. The sequence is that of Ribosome-recycling factor from Aliarcobacter butzleri (strain RM4018) (Arcobacter butzleri).